We begin with the raw amino-acid sequence, 288 residues long: NAD kinase (288 aa).

Asp68 functions as the Proton acceptor in the catalytic mechanism. Residues 68-69 (DG), 142-143 (ND), Arg153, Asp172, and Gln242 each bind NAD(+).

This sequence belongs to the NAD kinase family. A divalent metal cation is required as a cofactor.

It is found in the cytoplasm. It carries out the reaction NAD(+) + ATP = ADP + NADP(+) + H(+). In terms of biological role, involved in the regulation of the intracellular balance of NAD and NADP, and is a key enzyme in the biosynthesis of NADP. Catalyzes specifically the phosphorylation on 2'-hydroxyl of the adenosine moiety of NAD to yield NADP. The polypeptide is NAD kinase (Desulforamulus reducens (strain ATCC BAA-1160 / DSM 100696 / MI-1) (Desulfotomaculum reducens)).